A 223-amino-acid polypeptide reads, in one-letter code: N-terminal Xaa-Pro-Lys N-methyltransferase 1 (223 aa).

At methionine 1 the chain carries N-acetylmethionine. N-acetylthreonine; in N-terminal Xaa-Pro-Lys N-methyltransferase 1, N-terminally processed is present on threonine 2. S-adenosyl-L-methionine is bound by residues glycine 69, arginine 74, 91–93 (DVT), 119–120 (LQ), and glutamine 135.

Belongs to the methyltransferase superfamily. NTM1 family.

Its subcellular location is the nucleus. The catalysed reaction is N-terminal L-alanyl-L-prolyl-L-lysyl-[protein] + 3 S-adenosyl-L-methionine = N-terminal N,N,N-trimethyl-L-alanyl-L-prolyl-L-lysyl-[protein] + 3 S-adenosyl-L-homocysteine + 3 H(+). The enzyme catalyses N-terminal L-seryl-L-prolyl-L-lysyl-[protein] + 3 S-adenosyl-L-methionine = N-terminal N,N,N-trimethyl-L-seryl-L-prolyl-L-lysyl-[protein] + 3 S-adenosyl-L-homocysteine + 3 H(+). It carries out the reaction N-terminal L-prolyl-L-prolyl-L-lysyl-[protein] + 2 S-adenosyl-L-methionine = N-terminal N,N-dimethyl-L-prolyl-L-prolyl-L-lysyl-[protein] + 2 S-adenosyl-L-homocysteine + 2 H(+). Functionally, distributive alpha-N-methyltransferase that methylates the N-terminus of target proteins containing the N-terminal motif [Ala/Gly/Pro/Ser]-Pro-Lys when the initiator Met is cleaved. Specifically catalyzes mono-, di- or tri-methylation of the exposed alpha-amino group of the Ala, Gly or Ser residue in the [Ala/Gly/Ser]-Pro-Lys motif and mono- or di-methylation of Pro in the Pro-Pro-Lys motif. Some of the substrates may be primed by NTMT2-mediated monomethylation. Catalyzes the trimethylation of the N-terminal Gly in CENPA (after removal of Met-1). Responsible for the N-terminal methylation of KLHL31, MYL2, MYL3, RB1, RCC1, RPL23A and SET. Required during mitosis for normal bipolar spindle formation and chromosome segregation via its action on RCC1. The chain is N-terminal Xaa-Pro-Lys N-methyltransferase 1 (NTMT1) from Ailuropoda melanoleuca (Giant panda).